The following is a 35-amino-acid chain: MEALVYTFLLVSTLGIIFFAIFFREPPKIQTKKMK.

The helical transmembrane segment at 3 to 23 threads the bilayer; sequence ALVYTFLLVSTLGIIFFAIFF.

This sequence belongs to the PsbT family. As to quaternary structure, PSII is composed of 1 copy each of membrane proteins PsbA, PsbB, PsbC, PsbD, PsbE, PsbF, PsbH, PsbI, PsbJ, PsbK, PsbL, PsbM, PsbT, PsbY, PsbZ, Psb30/Ycf12, at least 3 peripheral proteins of the oxygen-evolving complex and a large number of cofactors. It forms dimeric complexes.

Its subcellular location is the plastid. It is found in the chloroplast thylakoid membrane. Functionally, found at the monomer-monomer interface of the photosystem II (PS II) dimer, plays a role in assembly and dimerization of PSII. PSII is a light-driven water plastoquinone oxidoreductase, using light energy to abstract electrons from H(2)O, generating a proton gradient subsequently used for ATP formation. In Suaeda aralocaspica (Seablite), this protein is Photosystem II reaction center protein T.